A 411-amino-acid polypeptide reads, in one-letter code: Bifunctional protein GlmU (411 aa).

The tract at residues 1–204 (MDAVILCAGK…ENNIKGIKLN (204 aa)) is pyrophosphorylase. UTP-binding positions include 6–9 (LCAG), Q74, and G79. N-acetyl-alpha-D-glucosamine 1-phosphate is bound by residues T80, G132, E144, and N158. A linker region spans residues 205-224 (GYWNDIGKPWDLLDANTHIL). Residues 225-411 (KNIKTDIKGK…EEIIIKTKRK (187 aa)) form an N-acetyltransferase region. H308 (proton acceptor) is an active-site residue. Acetyl-CoA is bound by residues A384 and K401.

The protein in the N-terminal section; belongs to the N-acetylglucosamine-1-phosphate uridyltransferase family. This sequence in the C-terminal section; belongs to the transferase hexapeptide repeat family.

The catalysed reaction is N-acetyl-alpha-D-glucosamine 1-phosphate + UTP + H(+) = UDP-N-acetyl-alpha-D-glucosamine + diphosphate. It catalyses the reaction alpha-D-glucosamine 1-phosphate + acetyl-CoA = N-acetyl-alpha-D-glucosamine 1-phosphate + CoA + H(+). It functions in the pathway nucleotide-sugar biosynthesis; UDP-N-acetyl-alpha-D-glucosamine biosynthesis; N-acetyl-alpha-D-glucosamine 1-phosphate from alpha-D-glucosamine 6-phosphate (route II): step 2/2. Its pathway is nucleotide-sugar biosynthesis; UDP-N-acetyl-alpha-D-glucosamine biosynthesis; UDP-N-acetyl-alpha-D-glucosamine from N-acetyl-alpha-D-glucosamine 1-phosphate: step 1/1. Its function is as follows. Catalyzes the last two sequential reactions in the de novo biosynthetic pathway for UDP-N-acetyl-glucosamine (UDP-GlcNAc). Responsible for the acetylation of GlcN-1-P to GlcNAc-1-P, and for the uridyl transfer from UTP to GlcNAc-1-P, to produce UDP-GlcNAc and pyrophosphate. This chain is Bifunctional protein GlmU, found in Methanococcus aeolicus (strain ATCC BAA-1280 / DSM 17508 / OCM 812 / Nankai-3).